Consider the following 357-residue polypeptide: Cell division control protein 10 (357 aa).

The region spanning 34-306 is the Septin-type G domain; it reads RGFQFNIMVV…ETFRSKQLIA (273 aa). Residues 44 to 51 are G1 motif; it reads GRSGLGKS. GTP-binding positions include 44–51, threonine 78, glycine 104, 184–192, glycine 240, and arginine 255; these read GRSGLGKS and KSDSLTLDE. Residues 101–104 form a G3 motif region; the sequence is DTPG. The segment at 183–186 is G4 motif; the sequence is AKSD. The tract at residues 310 to 357 is disordered; that stretch reads NASNPNRQSQLQKDQGQTSQQSNQDLKNTSGVPNAPMFQSTTGTAAAR.

It belongs to the TRAFAC class TrmE-Era-EngA-EngB-Septin-like GTPase superfamily. Septin GTPase family.

It localises to the bud neck. In terms of biological role, plays a role in the cell cycle. Involved in the formation of the ring of filaments in the neck region at the mother-bud junction during mitosis. This chain is Cell division control protein 10 (CDC10), found in Candida albicans (strain SC5314 / ATCC MYA-2876) (Yeast).